The primary structure comprises 286 residues: Phospholipase A1 (286 aa).

The first 20 residues, 1–20, serve as a signal peptide directing secretion; sequence MRISLACLAALCALPAGVMA. Over 21 to 49 the chain is Periplasmic; the sequence is QDASVHDKPAVRGSIIANLLQDHDNPFLL. Residues 50–62 form a beta stranded membrane-spanning segment; that stretch reads YPYESNYLLYTWT. The Extracellular portion of the chain corresponds to 63 to 81; sequence SDLNKEAIRSYDWAENARK. A beta stranded membrane pass occupies residues 82–96; it reads DEVKFQLSLAFPLWR. Over 97–102 the chain is Periplasmic; it reads GILGDN. The chain crosses the membrane as a beta stranded span at residues 103-115; the sequence is SLLGASYTQKSWW. Residues 116-125 lie on the Extracellular side of the membrane; that stretch reads QLSNSKESAP. A Ca(2+)-binding site is contributed by Ser-123. The beta stranded transmembrane segment at 126–145 threads the bilayer; it reads FRETNYEPQLFLGFATDYQF. Topologically, residues 146-147 are periplasmic; the sequence is AG. Residues 148-161 traverse the membrane as a beta stranded segment; that stretch reads WTLRDIEMGYNHDS. His-159 serves as the catalytic Proton acceptor. Ser-161 serves as the catalytic Nucleophile. Residues 162 to 170 lie on the Extracellular side of the membrane; that stretch reads NGRSDPTSR. Positions 164 and 169 each coordinate Ca(2+). A beta stranded membrane pass occupies residues 171–183; it reads SWNRLYARLMAQN. At 184-185 the chain is on the periplasmic side; it reads GN. The beta stranded transmembrane segment at 186 to 195 threads the bilayer; that stretch reads WLVEVKPWYV. Residues 196–213 are Extracellular-facing; the sequence is VGSTDDNPDITKYMGYYR. Residue Asp-201 coordinates Ca(2+). Residues 214–220 form a beta stranded membrane-spanning segment; it reads LKVGYQL. Over 221-222 the chain is Periplasmic; sequence GE. A beta stranded membrane pass occupies residues 223–231; it reads AILSAQGQY. Residues 232–238 lie on the Extracellular side of the membrane; the sequence is NWNTGYG. A beta stranded transmembrane segment spans residues 239-247; it reads GAELGVSYP. Residues 248 to 252 lie on the Periplasmic side of the membrane; the sequence is ITKHV. Residues 253-262 traverse the membrane as a beta stranded segment; the sequence is RAYTQIYSGY. Over 263 to 271 the chain is Extracellular; sequence GESLIDYNF. Residues 272–283 traverse the membrane as a beta stranded segment; sequence NQTRVGVGLMLN. Residues 284–286 are Periplasmic-facing; sequence DLF.

It belongs to the phospholipase A1 family. Homodimer; dimerization is reversible, and the dimeric form is the active one. Ca(2+) serves as cofactor.

It is found in the cell outer membrane. The enzyme catalyses a 1,2-diacyl-sn-glycero-3-phosphocholine + H2O = a 2-acyl-sn-glycero-3-phosphocholine + a fatty acid + H(+). It catalyses the reaction a 1,2-diacyl-sn-glycero-3-phosphocholine + H2O = a 1-acyl-sn-glycero-3-phosphocholine + a fatty acid + H(+). Hydrolysis of phosphatidylcholine with phospholipase A2 (EC 3.1.1.4) and phospholipase A1 (EC 3.1.1.32) activities. This chain is Phospholipase A1 (pldA), found in Klebsiella pneumoniae.